Here is a 647-residue protein sequence, read N- to C-terminus: Bifunctional enzyme CysN/CysC (647 aa).

The segment at 1 to 472 (MSHQSDLIAT…TEERAARFGQ (472 aa)) is sulfate adenylyltransferase. In terms of domain architecture, tr-type G spans 22-239 (KQLLRFITCG…LETVYIGSDR (218 aa)). Residues 31-38 (GSVDDGKS) are G1. 31–38 (GSVDDGKS) is a binding site for GTP. The interval 89-93 (GITID) is G2. The segment at 110–113 (DTPG) is G3. Residues 110–114 (DTPGH) and 165–168 (NKMD) contribute to the GTP site. A G4 region spans residues 165–168 (NKMD). The tract at residues 204–206 (SAL) is G5. An adenylyl-sulfate kinase region spans residues 473–614 (KPATVLLTGL…FPGVTAKYDV (142 aa)). 481–488 (GLTGSGKT) is a binding site for ATP.

In the C-terminal section; belongs to the APS kinase family. This sequence in the N-terminal section; belongs to the TRAFAC class translation factor GTPase superfamily. Classic translation factor GTPase family. CysN/NodQ subfamily. Heterodimer composed of CysD, the smaller subunit, and CysNC.

The enzyme catalyses sulfate + ATP + H(+) = adenosine 5'-phosphosulfate + diphosphate. The catalysed reaction is adenosine 5'-phosphosulfate + ATP = 3'-phosphoadenylyl sulfate + ADP + H(+). It functions in the pathway sulfur metabolism; hydrogen sulfide biosynthesis; sulfite from sulfate: step 1/3. It participates in sulfur metabolism; hydrogen sulfide biosynthesis; sulfite from sulfate: step 2/3. Functionally, with CysD forms the ATP sulfurylase (ATPS) that catalyzes the adenylation of sulfate producing adenosine 5'-phosphosulfate (APS) and diphosphate, the first enzymatic step in sulfur assimilation pathway. APS synthesis involves the formation of a high-energy phosphoric-sulfuric acid anhydride bond driven by GTP hydrolysis by CysN coupled to ATP hydrolysis by CysD. Its function is as follows. APS kinase catalyzes the synthesis of activated sulfate. This is Bifunctional enzyme CysN/CysC (cysNC) from Rhodopirellula baltica (strain DSM 10527 / NCIMB 13988 / SH1).